A 281-amino-acid chain; its full sequence is CCAAT/enhancer-binding protein epsilon (281 aa).

The tract at residues 1–30 is disordered; it reads MSHGTYYECEPRGGQQPLEFSGGRAGPGEL. A Glycyl lysine isopeptide (Lys-Gly) (interchain with G-Cter in SUMO2) cross-link involves residue Lys121. Position 181 is a phosphoserine (Ser181). Positions 204 to 267 constitute a bZIP domain; the sequence is SLEYRLRRER…DTLRNLFRQI (64 aa). Positions 208–228 are basic motif; sequence RLRRERNNIAVRKSRDKAKRR. The segment at 230 to 237 is leucine-zipper; it reads LETQQKVL.

The protein belongs to the bZIP family. C/EBP subfamily. As to quaternary structure, binds DNA as a homodimer and as a heterodimer. Can form stable heterodimers with CEBPA, CEBPB and CEBPD. Interacts with GATA1 and SPI1. Interacts with SMARCD2. Post-translationally, phosphorylated. In terms of tissue distribution, strongest expression occurs in promyelocyte and late-myeloblast-like cell lines.

It is found in the nucleus. Functionally, transcriptional activator. C/EBP are DNA-binding proteins that recognize two different motifs: the CCAAT homology common to many promoters and the enhanced core homology common to many enhancers. Required for the promyelocyte-myelocyte transition in myeloid differentiation. This chain is CCAAT/enhancer-binding protein epsilon (CEBPE), found in Homo sapiens (Human).